The following is a 188-amino-acid chain: Threonylcarbamoyl-AMP synthase (188 aa).

One can recognise a YrdC-like domain in the interval 3 to 188 (QLHPSEIKDL…RSGKILRNGQ (186 aa)).

The protein belongs to the SUA5 family. TsaC subfamily.

It localises to the cytoplasm. It catalyses the reaction L-threonine + hydrogencarbonate + ATP = L-threonylcarbamoyladenylate + diphosphate + H2O. Required for the formation of a threonylcarbamoyl group on adenosine at position 37 (t(6)A37) in tRNAs that read codons beginning with adenine. Catalyzes the conversion of L-threonine, HCO(3)(-)/CO(2) and ATP to give threonylcarbamoyl-AMP (TC-AMP) as the acyladenylate intermediate, with the release of diphosphate. This Shewanella sp. (strain ANA-3) protein is Threonylcarbamoyl-AMP synthase.